The primary structure comprises 312 residues: Cytochrome f (312 aa).

Residues 1–30 (MYLSKNFFLNLKTFIFSFFVLCFFSQSAQA) form the signal peptide. Tyrosine 31, cysteine 51, cysteine 54, and histidine 55 together coordinate heme. The helical transmembrane segment at 278 to 298 (VQGLLLFSLFILLAQIFLVLK) threads the bilayer.

It belongs to the cytochrome f family. In terms of assembly, the 4 large subunits of the cytochrome b6-f complex are cytochrome b6, subunit IV (17 kDa polypeptide, petD), cytochrome f and the Rieske protein, while the 4 small subunits are PetG, PetL, PetM and PetN. The complex functions as a dimer. It depends on heme as a cofactor.

It is found in the plastid. Its subcellular location is the chloroplast thylakoid membrane. Functionally, component of the cytochrome b6-f complex, which mediates electron transfer between photosystem II (PSII) and photosystem I (PSI), cyclic electron flow around PSI, and state transitions. This is Cytochrome f (petA) from Bigelowiella natans (Pedinomonas minutissima).